The chain runs to 505 residues: Cytochrome P450 71A2 (505 aa).

Residues W7–F27 traverse the membrane as a helical segment. Residue C448 coordinates heme.

The protein belongs to the cytochrome P450 family. Heme serves as cofactor.

It localises to the membrane. Functionally, may have a role in maturation, such as during flavor formation or other metabolite production specific to aging tissues. The chain is Cytochrome P450 71A2 (CYP71A2) from Solanum melongena (Eggplant).